Consider the following 449-residue polypeptide: Xylose isomerase (449 aa).

Active-site residues include His-101 and Asp-104. Mg(2+) is bound by residues Glu-232, Glu-268, His-271, Asp-296, Asp-307, Asp-309, and Asp-340.

The protein belongs to the xylose isomerase family. In terms of assembly, homotetramer. It depends on Mg(2+) as a cofactor.

It is found in the cytoplasm. The enzyme catalyses alpha-D-xylose = alpha-D-xylulofuranose. This chain is Xylose isomerase, found in Bifidobacterium longum (strain DJO10A).